We begin with the raw amino-acid sequence, 804 residues long: MTSFQSTLDDDEDGIAEELAASQREISVAEFFEKNKHMLGFDSGARGLVTAVKEAVDNALDATEEAGILPDIYVEISEGRDYYTLIVEDNGPGITNAQIPKIFGKLLYGSRFHAREQSRGQQGIGISAAVLYSQLTSGKPVRIESRTQDSETANVYELIIDTDTNEPEISAETEVSAAKSDLRGTHGTRIEMALDANMRARGQLHDYIKHTAVVNPHARIELQEPGGELKSERAEEASLPAETDEILPHPHGVELGTLIKMLAETDSHSVSGFLQSEFTRVGSKTATGIIDAFRDEHFGREMRWRPPADADLEATVADAVANKDATHTAVFARTVADAVRDADSIAPAELGALVADAAADAQDDTGTSFGETVQANVVAAVRDALTSDRVADVLGPVDEATTVQKDDATVRGLAERIAAKFESGGDTDRVTRDTLDEYVFRAAENTAEYADATIGETARENVADALWARMATVPDDPPNTSALADDRDAASDLLAAMASVNVMAPPTSCLSPIEADQLEAGLRTEFDADFYAAATRDADVHGGDPFIVEAGIAYGGDIDSEGGVQLMRFANRVPLVYQRGACATTDVLGDIGWRNYNLSQPGGSGLPQGPAVIMVHVASTNVPFTSESKDAIANVPEIEAEIELAVREAARELKSFLQKRQSMRKRQQKQDVIMDILPTMAEKVGELTGRGGVDVSDSLARIMNNVLVERARSDDGQTVTLRVENHGTGSVDVDVTDIVSAEPDGVGDDASVVAMDDEYFVKWTPAVAGDDAAELTYSVDADADCELSVSGVADARLTVSEADT.

Residues Asn58, Asp89, 110–111, 120–127, and Lys629 each bind ATP; these read SR and GQQGIGIS.

The protein belongs to the TOP6B family. Homodimer. Heterotetramer of two Top6A and two Top6B chains.

The catalysed reaction is ATP-dependent breakage, passage and rejoining of double-stranded DNA.. Functionally, relaxes both positive and negative superturns and exhibits a strong decatenase activity. The polypeptide is Type 2 DNA topoisomerase 6 subunit B (Halobacterium salinarum (strain ATCC 29341 / DSM 671 / R1)).